A 314-amino-acid chain; its full sequence is Olfactory receptor 5P51 (314 aa).

Over 1 to 28 (MAFLEDGNHTAVTEFVLFGLTDDPVLRV) the chain is Extracellular. An N-linked (GlcNAc...) asparagine glycan is attached at asparagine 8. A helical transmembrane segment spans residues 29–49 (ILFIIFLCIYLVNVSGNLSTI). The Cytoplasmic segment spans residues 50 to 57 (LLIRVSSQ). A helical membrane pass occupies residues 58 to 78 (LHHPMYFFLSHLASVDVGYSS). Residues 79 to 102 (TVTPKMLANFLLERSTISYLGCTI) are Extracellular-facing. A disulfide bond links cysteine 100 and cysteine 192. The chain crosses the membrane as a helical span at residues 103 to 123 (QLFSGAFVGTLECFLLATMAY). Topologically, residues 124 to 136 (DRFIAICNPLLYS) are cytoplasmic. The helical transmembrane segment at 137–157 (TKMSTQVCIQLLVGSYIGGFL) threads the bilayer. The Extracellular portion of the chain corresponds to 158-199 (NASSFLLSFFPLLFCGPNRVNHYSCDLTPLIELSCSGSNVPI). Residues 200 to 220 (VPASFCSAFVIIVTVSVIAIS) traverse the membrane as a helical segment. Topologically, residues 221-240 (YTYILITILKMRSTEGRQKA) are cytoplasmic. Residues 241-261 (FSTCTSHLTAVTLYYGTVTFI) form a helical membrane-spanning segment. Residues 262 to 274 (YVMPKSSYSTDQN) lie on the Extracellular side of the membrane. The helical transmembrane segment at 275-295 (KVVSVFYTVVIPMLNPIIYSL) threads the bilayer. Over 296–314 (RNNEIKGALKRQLARKIFS) the chain is Cytoplasmic.

Belongs to the G-protein coupled receptor 1 family.

It is found in the cell membrane. Its function is as follows. Potential odorant receptor. This chain is Olfactory receptor 5P51, found in Mus musculus (Mouse).